Reading from the N-terminus, the 345-residue chain is GTPase Obg (345 aa).

One can recognise an Obg domain in the interval 1 to 159; sequence MRFIDEASIT…FHLKLELKLL (159 aa). Residues 160–329 enclose the OBG-type G domain; it reads ADVGIVGLPN…LIQILARQIA (170 aa). GTP is bound by residues 166–173, 191–195, 213–216, 283–286, and 310–312; these read GLPNAGKS, FTTLT, DIPG, NKID, and SAA. Serine 173 and threonine 193 together coordinate Mg(2+).

This sequence belongs to the TRAFAC class OBG-HflX-like GTPase superfamily. OBG GTPase family. In terms of assembly, monomer. Requires Mg(2+) as cofactor.

It is found in the cytoplasm. An essential GTPase which binds GTP, GDP and possibly (p)ppGpp with moderate affinity, with high nucleotide exchange rates and a fairly low GTP hydrolysis rate. Plays a role in control of the cell cycle, stress response, ribosome biogenesis and in those bacteria that undergo differentiation, in morphogenesis control. In Desulforapulum autotrophicum (strain ATCC 43914 / DSM 3382 / VKM B-1955 / HRM2) (Desulfobacterium autotrophicum), this protein is GTPase Obg.